We begin with the raw amino-acid sequence, 61 residues long: Large ribosomal subunit protein bL28 (61 aa).

Belongs to the bacterial ribosomal protein bL28 family.

The chain is Large ribosomal subunit protein bL28 from Lactobacillus gasseri (strain ATCC 33323 / DSM 20243 / BCRC 14619 / CIP 102991 / JCM 1131 / KCTC 3163 / NCIMB 11718 / NCTC 13722 / AM63).